The following is a 200-amino-acid chain: Glycerol-3-phosphate acyltransferase (200 aa).

Transmembrane regions (helical) follow at residues 2–22, 51–71, 84–104, 114–134, and 159–179; these read FNISAVAVSYLIGSLSFAVIV, KAAALTLLGDAAKGLVAVLLA, AIAAVALAALVGHMWPVFFGF, LGVLLALSPATALVCALIWLV, and FFMPHTSWIWATLLIALLVLF.

Belongs to the PlsY family. As to quaternary structure, probably interacts with PlsX.

The protein resides in the cell inner membrane. The catalysed reaction is an acyl phosphate + sn-glycerol 3-phosphate = a 1-acyl-sn-glycero-3-phosphate + phosphate. Its pathway is lipid metabolism; phospholipid metabolism. Functionally, catalyzes the transfer of an acyl group from acyl-phosphate (acyl-PO(4)) to glycerol-3-phosphate (G3P) to form lysophosphatidic acid (LPA). This enzyme utilizes acyl-phosphate as fatty acyl donor, but not acyl-CoA or acyl-ACP. This chain is Glycerol-3-phosphate acyltransferase, found in Neisseria meningitidis serogroup C (strain 053442).